The following is a 338-amino-acid chain: Ketol-acid reductoisomerase (NADP(+)) (338 aa).

In terms of domain architecture, KARI N-terminal Rossmann spans methionine 1 to threonine 181. NADP(+)-binding positions include tyrosine 24–glutamine 27, arginine 47, and serine 52. The active site involves histidine 107. Position 133 (glycine 133) interacts with NADP(+). A KARI C-terminal knotted domain is found at asparagine 182 to isoleucine 327. 4 residues coordinate Mg(2+): aspartate 190, glutamate 194, glutamate 226, and glutamate 230. Substrate is bound at residue serine 251.

The protein belongs to the ketol-acid reductoisomerase family. Mg(2+) is required as a cofactor.

The enzyme catalyses (2R)-2,3-dihydroxy-3-methylbutanoate + NADP(+) = (2S)-2-acetolactate + NADPH + H(+). The catalysed reaction is (2R,3R)-2,3-dihydroxy-3-methylpentanoate + NADP(+) = (S)-2-ethyl-2-hydroxy-3-oxobutanoate + NADPH + H(+). Its pathway is amino-acid biosynthesis; L-isoleucine biosynthesis; L-isoleucine from 2-oxobutanoate: step 2/4. It participates in amino-acid biosynthesis; L-valine biosynthesis; L-valine from pyruvate: step 2/4. In terms of biological role, involved in the biosynthesis of branched-chain amino acids (BCAA). Catalyzes an alkyl-migration followed by a ketol-acid reduction of (S)-2-acetolactate (S2AL) to yield (R)-2,3-dihydroxy-isovalerate. In the isomerase reaction, S2AL is rearranged via a Mg-dependent methyl migration to produce 3-hydroxy-3-methyl-2-ketobutyrate (HMKB). In the reductase reaction, this 2-ketoacid undergoes a metal-dependent reduction by NADPH to yield (R)-2,3-dihydroxy-isovalerate. The chain is Ketol-acid reductoisomerase (NADP(+)) from Burkholderia cenocepacia (strain HI2424).